The following is a 120-amino-acid chain: DNA-directed RNA polymerase II subunit rpb11 (120 aa).

It belongs to the archaeal Rpo11/eukaryotic RPB11/RPC19 RNA polymerase subunit family. Component of the RNA polymerase II (Pol II) complex consisting of 12 subunits.

The protein localises to the nucleus. Its function is as follows. DNA-dependent RNA polymerase catalyzes the transcription of DNA into RNA using the four ribonucleoside triphosphates as substrates. Component of RNA polymerase II which synthesizes mRNA precursors and many functional non-coding RNAs. Pol II is the central component of the basal RNA polymerase II transcription machinery. It is composed of mobile elements that move relative to each other. RPB11 is part of the core element with the central large cleft. The protein is DNA-directed RNA polymerase II subunit rpb11 (polr2j) of Dictyostelium discoideum (Social amoeba).